The following is a 373-amino-acid chain: Cathecol O-methyltransferase 1 (373 aa).

G209, D232, D252, M253, M265, and K266 together coordinate S-adenosyl-L-homocysteine. D232 contributes to the S-adenosyl-L-methionine binding site. H279 serves as the catalytic Proton acceptor.

The protein belongs to the class I-like SAM-binding methyltransferase superfamily. Cation-independent O-methyltransferase family. COMT subfamily.

It carries out the reaction catechol + S-adenosyl-L-methionine = guaiacol + S-adenosyl-L-homocysteine + H(+). Functionally, O-methyltransferase that catalyzes the conversion of catechol to guaiacol. Involved in the production of guaiacol in fruits. This is Cathecol O-methyltransferase 1 from Solanum lycopersicum (Tomato).